The primary structure comprises 474 residues: 6-phospho-beta-glucosidase AscB (474 aa).

Residue E180 is the Proton donor of the active site. E372 acts as the Nucleophile in catalysis.

It belongs to the glycosyl hydrolase 1 family.

It carries out the reaction 6-phospho-beta-D-glucosyl-(1-&gt;4)-D-glucose + H2O = D-glucose 6-phosphate + D-glucose. In terms of biological role, can hydrolyze salicin, cellobiose, and probably arbutin. This chain is 6-phospho-beta-glucosidase AscB (ascB), found in Escherichia coli (strain K12).